The primary structure comprises 273 residues: Protein BMH2 (273 aa).

Ser-2 bears the N-acetylserine mark. The segment at 236-273 is disordered; the sequence is DISESGQEDQQQQQQQQQQQQQQQQQAPAEQTQGEPTK. Residues 245 to 261 are compositionally biased toward low complexity; the sequence is QQQQQQQQQQQQQQQQQ. Polar residues predominate over residues 262–273; that stretch reads APAEQTQGEPTK.

This sequence belongs to the 14-3-3 family. As to quaternary structure, interacts with NTH1 (via N-terminus when phosphorylated by PKA); the interaction is direct and activates NTH1. Interacts with FIN1.

Its subcellular location is the cytoplasm. The protein localises to the nucleus. The chain is Protein BMH2 (BMH2) from Saccharomyces cerevisiae (strain ATCC 204508 / S288c) (Baker's yeast).